Reading from the N-terminus, the 245-residue chain is 8-amino-3,8-dideoxy-manno-octulosonate cytidylyltransferase (245 aa).

The protein belongs to the KdsB family.

Its subcellular location is the cytoplasm. The catalysed reaction is 8-amino-3,8-dideoxy-alpha-D-manno-octulosonate + CTP = CMP-8-amino-3,8-dideoxy-alpha-D-manno-oct-2-ulosonate + diphosphate. Its pathway is bacterial outer membrane biogenesis; lipopolysaccharide biosynthesis. In terms of biological role, activates KDO8N (a required 8-carbon sugar) for incorporation into bacterial lipopolysaccharide in the Shewanella genus. The protein is 8-amino-3,8-dideoxy-manno-octulosonate cytidylyltransferase of Shewanella oneidensis (strain ATCC 700550 / JCM 31522 / CIP 106686 / LMG 19005 / NCIMB 14063 / MR-1).